Reading from the N-terminus, the 645-residue chain is Acetyl-coenzyme A synthetase (645 aa).

CoA-binding positions include 190-193 and T308; that span reads RGGR. ATP contacts are provided by residues 384-386, 408-413, D497, and R512; these read GEP and DTWWQT. S520 is a binding site for CoA. R523 is an ATP binding site. Mg(2+)-binding residues include V534, H536, and V539. K606 carries the post-translational modification N6-acetyllysine.

The protein belongs to the ATP-dependent AMP-binding enzyme family. It depends on Mg(2+) as a cofactor. In terms of processing, acetylated. Deacetylation by the SIR2-homolog deacetylase activates the enzyme.

It carries out the reaction acetate + ATP + CoA = acetyl-CoA + AMP + diphosphate. In terms of biological role, catalyzes the conversion of acetate into acetyl-CoA (AcCoA), an essential intermediate at the junction of anabolic and catabolic pathways. AcsA undergoes a two-step reaction. In the first half reaction, AcsA combines acetate with ATP to form acetyl-adenylate (AcAMP) intermediate. In the second half reaction, it can then transfer the acetyl group from AcAMP to the sulfhydryl group of CoA, forming the product AcCoA. The chain is Acetyl-coenzyme A synthetase from Saccharophagus degradans (strain 2-40 / ATCC 43961 / DSM 17024).